Here is a 448-residue protein sequence, read N- to C-terminus: MSERSLLVVVLAAGEGTRMASRLPKVLHRIAGRSMLHHVLETTRQAGATRVAVVIGPDREDVAAEAHRVRPDAQVFVQTERLGTAHAVLAARAALEEPADDVLVLYADTPLLRPETLENLRAPLADGAAVAVLGFRPADPTGYGRLLTQGDALVAIREEKDATPDERRVDFCNAGVMALRAREALSILTRIGNANAKGEYYLTDAVEIARADGLSAVATEAEVDEVAGVNSRLQLAEAEAILQGRLRRAAMAGGATLVAPETVFLSVDTRLGRDVLVEPNVVFGPGVTVEDDVVIHAFSHLEGAHLERGVSIGPYARLRPGTRLGEGVRIGNFVETKAALIDAGAKVNHLSYVGDAHVGSNANVGAGTITCNYDGFSKHRTEIGAGAFIGTNSSLVAPVSVGAGAYIGSGSVITDDVPADALALGRGRQAVKEGWAAALRAARGKPKV.

Residues 1–232 are pyrophosphorylase; it reads MSERSLLVVV…VDEVAGVNSR (232 aa). Residues 11-14, Lys-25, Gln-78, and 83-84 each bind UDP-N-acetyl-alpha-D-glucosamine; these read LAAG and GT. Asp-108 is a Mg(2+) binding site. Residues Gly-144, Glu-158, Asn-173, and Asn-230 each coordinate UDP-N-acetyl-alpha-D-glucosamine. Asn-230 is a binding site for Mg(2+). The linker stretch occupies residues 233-253; sequence LQLAEAEAILQGRLRRAAMAG. The segment at 254-448 is N-acetyltransferase; it reads GATLVAPETV…LRAARGKPKV (195 aa). Arg-319 and Lys-337 together coordinate UDP-N-acetyl-alpha-D-glucosamine. The Proton acceptor role is filled by His-349. Tyr-352 and Asn-363 together coordinate UDP-N-acetyl-alpha-D-glucosamine. Acetyl-CoA is bound by residues Ala-366, 372-373, Ser-409, and Arg-426; that span reads NY.

This sequence in the N-terminal section; belongs to the N-acetylglucosamine-1-phosphate uridyltransferase family. It in the C-terminal section; belongs to the transferase hexapeptide repeat family. Homotrimer. Mg(2+) is required as a cofactor.

It is found in the cytoplasm. The catalysed reaction is alpha-D-glucosamine 1-phosphate + acetyl-CoA = N-acetyl-alpha-D-glucosamine 1-phosphate + CoA + H(+). The enzyme catalyses N-acetyl-alpha-D-glucosamine 1-phosphate + UTP + H(+) = UDP-N-acetyl-alpha-D-glucosamine + diphosphate. The protein operates within nucleotide-sugar biosynthesis; UDP-N-acetyl-alpha-D-glucosamine biosynthesis; N-acetyl-alpha-D-glucosamine 1-phosphate from alpha-D-glucosamine 6-phosphate (route II): step 2/2. Its pathway is nucleotide-sugar biosynthesis; UDP-N-acetyl-alpha-D-glucosamine biosynthesis; UDP-N-acetyl-alpha-D-glucosamine from N-acetyl-alpha-D-glucosamine 1-phosphate: step 1/1. It participates in bacterial outer membrane biogenesis; LPS lipid A biosynthesis. Its function is as follows. Catalyzes the last two sequential reactions in the de novo biosynthetic pathway for UDP-N-acetylglucosamine (UDP-GlcNAc). The C-terminal domain catalyzes the transfer of acetyl group from acetyl coenzyme A to glucosamine-1-phosphate (GlcN-1-P) to produce N-acetylglucosamine-1-phosphate (GlcNAc-1-P), which is converted into UDP-GlcNAc by the transfer of uridine 5-monophosphate (from uridine 5-triphosphate), a reaction catalyzed by the N-terminal domain. This chain is Bifunctional protein GlmU, found in Azorhizobium caulinodans (strain ATCC 43989 / DSM 5975 / JCM 20966 / LMG 6465 / NBRC 14845 / NCIMB 13405 / ORS 571).